The sequence spans 367 residues: Folliculin-like protein bhd1 (367 aa).

2 disordered regions span residues 41-75 (RSIG…QSST) and 92-115 (SKGP…SPIS). The span at 54–64 (EAFKNELDNRN) shows a compositional bias: basic and acidic residues. 2 stretches are compositionally biased toward polar residues: residues 65-75 (NADSQSLQSST) and 99-115 (RVNS…SPIS). The region spanning 131 to 302 (FSVPDVQPRL…SNIGTAPSYE (172 aa)) is the uDENN FLCN/SMCR8-type domain.

Belongs to the folliculin family.

The protein localises to the nucleus. The protein resides in the cytoplasm. The chain is Folliculin-like protein bhd1 (bhd1) from Schizosaccharomyces pombe (strain 972 / ATCC 24843) (Fission yeast).